The sequence spans 48 residues: Protein PsbN (48 aa).

The chain crosses the membrane as a helical span at residues 12-34 (LLIAMVTITFGLTGYGLYTAFGP).

It belongs to the PsbN family.

The protein localises to the cellular thylakoid membrane. Its function is as follows. May play a role in photosystem I and II biogenesis. The chain is Protein PsbN from Prochlorococcus marinus (strain MIT 9313).